The sequence spans 1307 residues: Light-sensor Protein kinase (1307 aa).

The GAF domain maps to 215 to 394 (DIELLCDTIV…VFGMQLNLHV (180 aa)). Cys320 is a binding site for phytochromobilin. The PAS domain occupies 609–680 (LANEMSRVLE…RLLSLALQGE (72 aa)). One can recognise a PAC domain in the interval 683–739 (QNVEIKLKTFGTQTTERAVILIVNACCSRDASDFVVGVFFVGQDVTEQRMFMDRFTR). The segment at 779–1003 (DHATGSVERL…WSFSEKFFQW (225 aa)) is hinge. The Protein kinase domain maps to 1004–1307 (IQITGSLGSG…DSYPSTEEPS (304 aa)). ATP is bound by residues 1010-1018 (LGSGSSATV) and Lys1031. The active site involves Asp1127.

In the N-terminal section; belongs to the phytochrome family. The protein in the C-terminal section; belongs to the protein kinase superfamily. Ser/Thr protein kinase family. In terms of assembly, homodimer. Contains one covalently linked phytochromobilin chromophore.

It localises to the cell membrane. It catalyses the reaction L-seryl-[protein] + ATP = O-phospho-L-seryl-[protein] + ADP + H(+). The catalysed reaction is L-threonyl-[protein] + ATP = O-phospho-L-threonyl-[protein] + ADP + H(+). Functionally, regulatory photoreceptor which exists in two forms that are reversibly interconvertible by light: the Pr form that absorbs maximally in the red region of the spectrum and the Pfr form that absorbs maximally in the far-red region. Photoconversion of Pr to Pfr induces an array of morphogenic responses, whereas reconversion of Pfr to Pr cancels the induction of those responses. Pfr controls the expression of a number of nuclear genes including those encoding the small subunit of ribulose-bisphosphate carboxylase, chlorophyll A/B binding protein, protochlorophyllide reductase, rRNA, etc. It also controls the expression of its own gene(s) in a negative feedback fashion. The protein is Light-sensor Protein kinase (PHY1) of Ceratodon purpureus (Fire moss).